We begin with the raw amino-acid sequence, 336 residues long: Dihydroorotate dehydrogenase (quinone) (336 aa).

FMN-binding positions include Ala-62–Lys-66 and Thr-86. A substrate-binding site is contributed by Lys-66. Substrate is bound at residue Asn-111–Phe-115. Residues Asn-139 and Asn-172 each contribute to the FMN site. Asn-172 lines the substrate pocket. Catalysis depends on Ser-175, which acts as the Nucleophile. Asn-177 is a substrate binding site. FMN is bound by residues Lys-217 and Thr-245. Asn-246 to Thr-247 lines the substrate pocket. Residues Gly-268, Gly-297, and Tyr-318–Ser-319 contribute to the FMN site.

Belongs to the dihydroorotate dehydrogenase family. Type 2 subfamily. As to quaternary structure, monomer. It depends on FMN as a cofactor.

It is found in the cell membrane. The enzyme catalyses (S)-dihydroorotate + a quinone = orotate + a quinol. Its pathway is pyrimidine metabolism; UMP biosynthesis via de novo pathway; orotate from (S)-dihydroorotate (quinone route): step 1/1. In terms of biological role, catalyzes the conversion of dihydroorotate to orotate with quinone as electron acceptor. The protein is Dihydroorotate dehydrogenase (quinone) of Hamiltonella defensa subsp. Acyrthosiphon pisum (strain 5AT).